A 68-amino-acid polypeptide reads, in one-letter code: Metallothionein-3 (68 aa).

M1 is subject to N-acetylmethionine. Residues 1 to 30 form a beta region; that stretch reads MDPETCPCPTGGSCTCSDPCKCEGCTCASS. 8 residues coordinate a divalent metal cation: C6, C8, C14, C16, C20, C22, C25, and C27. The alpha stretch occupies residues 31-68; that stretch reads KKSCCSCCPAECEKCAKDCVCKGGEGAEAEEKKCSCCQ. S33 carries the post-translational modification Phosphoserine. A divalent metal cation-binding residues include C34, C35, C37, C38, C42, C45, C49, C51, C64, C66, and C67.

It belongs to the metallothionein superfamily. Type 1 family.

Its function is as follows. Binds heavy metals. Contains five zinc and one copper atoms per polypeptide chain and only a negligible amount of cadmium. The protein is Metallothionein-3 (MT3) of Bos mutus grunniens (Wild yak).